The primary structure comprises 219 residues: PKHD-type hydroxylase SYNPCC7002_A2658 (219 aa).

In terms of domain architecture, Fe2OG dioxygenase spans 78-172 (TVHTLLFSRY…RLVAVGWVQS (95 aa)). 3 residues coordinate Fe cation: His96, Asp98, and His153. Arg163 is a binding site for 2-oxoglutarate.

The cofactor is Fe(2+). It depends on L-ascorbate as a cofactor.

This Picosynechococcus sp. (strain ATCC 27264 / PCC 7002 / PR-6) (Agmenellum quadruplicatum) protein is PKHD-type hydroxylase SYNPCC7002_A2658.